Here is a 34-residue protein sequence, read N- to C-terminus: ECRWYLGGCKEDSECCEHLQCHSYWEWCLWDGSF.

Intrachain disulfides connect C2–C16, C9–C21, and C15–C28. F34 carries the phenylalanine amide modification.

Belongs to the neurotoxin 10 (Hwtx-1) family. 62 (Vatx) subfamily. As to expression, expressed by the venom gland.

The protein resides in the secreted. In terms of biological role, selectively activates mammalian TRPV1, or capsaicin receptor, a non-selective cation channel expressed by sensory neurons of the pain pathway. Is more potent than VaTx1 and VaTx2. Interacts with distinct regions of the channel than capsaicin, since it only acts on the extracellular face of the channel, and capsaicin binds to the cytosolic side. Also activates avian TRPV1, which is insensitive to capsaicin. In mice, elicits pain-related behaviors, such as licking and flinching of the affected limb. The paw of toxin-injected mice shows substantial edema. The chain is Tau-theraphotoxin-Pc1c from Psalmopoeus cambridgei (Trinidad chevron tarantula).